We begin with the raw amino-acid sequence, 271 residues long: Ribosomal RNA small subunit methyltransferase A (271 aa).

The S-adenosyl-L-methionine site is built by His-11, Leu-13, Gly-38, Glu-58, Asp-86, and Asn-101.

The protein belongs to the class I-like SAM-binding methyltransferase superfamily. rRNA adenine N(6)-methyltransferase family. RsmA subfamily.

Its subcellular location is the cytoplasm. It catalyses the reaction adenosine(1518)/adenosine(1519) in 16S rRNA + 4 S-adenosyl-L-methionine = N(6)-dimethyladenosine(1518)/N(6)-dimethyladenosine(1519) in 16S rRNA + 4 S-adenosyl-L-homocysteine + 4 H(+). Functionally, specifically dimethylates two adjacent adenosines (A1518 and A1519) in the loop of a conserved hairpin near the 3'-end of 16S rRNA in the 30S particle. May play a critical role in biogenesis of 30S subunits. The polypeptide is Ribosomal RNA small subunit methyltransferase A (Helicobacter pylori (strain P12)).